A 339-amino-acid polypeptide reads, in one-letter code: DNA-directed RNA polymerase subunit alpha (339 aa).

Residues 1 to 233 (MVREEVAGST…DLFLPFLHAE (233 aa)) are alpha N-terminal domain (alpha-NTD). The alpha C-terminal domain (alpha-CTD) stretch occupies residues 264–339 (KKGIPLNCIF…IDLLKNKLSF (76 aa)).

It belongs to the RNA polymerase alpha chain family. As to quaternary structure, in plastids the minimal PEP RNA polymerase catalytic core is composed of four subunits: alpha, beta, beta', and beta''. When a (nuclear-encoded) sigma factor is associated with the core the holoenzyme is formed, which can initiate transcription.

It is found in the plastid. The protein resides in the chloroplast. The enzyme catalyses RNA(n) + a ribonucleoside 5'-triphosphate = RNA(n+1) + diphosphate. In terms of biological role, DNA-dependent RNA polymerase catalyzes the transcription of DNA into RNA using the four ribonucleoside triphosphates as substrates. This Heteranthelium piliferum (Elymus pilifer) protein is DNA-directed RNA polymerase subunit alpha.